Reading from the N-terminus, the 194-residue chain is Anaphase-promoting complex subunit CDC26 (194 aa).

Residues 47–194 (EPMDQSEPPR…PSSNTRSHRH (148 aa)) are disordered. Composition is skewed to polar residues over residues 79–94 (GECTRTSIAPTLTSAR) and 102–112 (LTLSTPVNPVS). Composition is skewed to low complexity over residues 154–166 (DESPTPSDSPESP) and 174–194 (TPGNPTSTSGGPSSNTRSHRH).

The protein belongs to the CDC26 family. The APC/C complex is probably composed of at least 12 subunits: apc-2, apc-10, apc-11, cdc-26, emb-1, emb-27, emb-30, mat-1, mat-2, mat-3, such-1 and gfi-3.

The protein localises to the nucleus. Its pathway is protein modification; protein ubiquitination. Its function is as follows. Probable component of the anaphase promoting complex/cyclosome (APC/C), a cell cycle-regulated E3 ubiquitin ligase that controls progression through mitosis and the G1 phase of the cell cycle. The APC/C complex acts by mediating ubiquitination and subsequent degradation of target proteins. Developmental role in early embryogenesis and the metaphase to anaphase transition in meiosis and mitosis. Required for embryonic anterior-posterior axis formation. This chain is Anaphase-promoting complex subunit CDC26, found in Caenorhabditis elegans.